Consider the following 76-residue polypeptide: Small proline-rich protein 4 (76 aa).

The segment at 38–76 is disordered; the sequence is PKTKDPCVPQAKKQCPARSTTNPAQEKCPAQQDPKCKQK.

It belongs to the cornifin (SPRR) family. Cross-linked to membrane proteins by transglutaminase.

It is found in the cytoplasm. Its subcellular location is the cell cortex. In terms of biological role, cross-linked envelope protein of keratinocytes. Involved in UV-induced cornification. The polypeptide is Small proline-rich protein 4 (Sprr4) (Mus musculus (Mouse)).